A 238-amino-acid polypeptide reads, in one-letter code: Serine protease SplE (238 aa).

A signal peptide spans 1–36 (MNKNIIIKSIAALTILTSVTGVGTTMVEGIQQTAKA). Catalysis depends on charge relay system residues H75, D113, and S191.

It belongs to the peptidase S1B family.

It is found in the secreted. This is Serine protease SplE (splE) from Staphylococcus aureus.